The following is a 379-amino-acid chain: UDP-4-amino-4-deoxy-L-arabinose--oxoglutarate aminotransferase (379 aa).

Lys182 is modified (N6-(pyridoxal phosphate)lysine).

Belongs to the DegT/DnrJ/EryC1 family. ArnB subfamily. In terms of assembly, homodimer. It depends on pyridoxal 5'-phosphate as a cofactor.

The enzyme catalyses UDP-4-amino-4-deoxy-beta-L-arabinose + 2-oxoglutarate = UDP-beta-L-threo-pentopyranos-4-ulose + L-glutamate. The protein operates within nucleotide-sugar biosynthesis; UDP-4-deoxy-4-formamido-beta-L-arabinose biosynthesis; UDP-4-deoxy-4-formamido-beta-L-arabinose from UDP-alpha-D-glucuronate: step 2/3. Its pathway is bacterial outer membrane biogenesis; lipopolysaccharide biosynthesis. Functionally, catalyzes the conversion of UDP-4-keto-arabinose (UDP-Ara4O) to UDP-4-amino-4-deoxy-L-arabinose (UDP-L-Ara4N). The modified arabinose is attached to lipid A and is required for resistance to polymyxin and cationic antimicrobial peptides. In Salmonella dublin (strain CT_02021853), this protein is UDP-4-amino-4-deoxy-L-arabinose--oxoglutarate aminotransferase.